Reading from the N-terminus, the 238-residue chain is Octanoyltransferase (238 aa).

Residues 44–224 (AGGPDSLLLL…AVLDALDGRI (181 aa)) enclose the BPL/LPL catalytic domain. Substrate-binding positions include 82–89 (RGGKITWH), 154–156 (AIG), and 167–169 (GFA). Cys185 serves as the catalytic Acyl-thioester intermediate.

This sequence belongs to the LipB family.

It is found in the cytoplasm. It carries out the reaction octanoyl-[ACP] + L-lysyl-[protein] = N(6)-octanoyl-L-lysyl-[protein] + holo-[ACP] + H(+). It functions in the pathway protein modification; protein lipoylation via endogenous pathway; protein N(6)-(lipoyl)lysine from octanoyl-[acyl-carrier-protein]: step 1/2. Catalyzes the transfer of endogenously produced octanoic acid from octanoyl-acyl-carrier-protein onto the lipoyl domains of lipoate-dependent enzymes. Lipoyl-ACP can also act as a substrate although octanoyl-ACP is likely to be the physiological substrate. The sequence is that of Octanoyltransferase from Mycolicibacterium gilvum (strain PYR-GCK) (Mycobacterium gilvum (strain PYR-GCK)).